The sequence spans 135 residues: ATP synthase epsilon chain (135 aa).

It belongs to the ATPase epsilon chain family. F-type ATPases have 2 components, CF(1) - the catalytic core - and CF(0) - the membrane proton channel. CF(1) has five subunits: alpha(3), beta(3), gamma(1), delta(1), epsilon(1). CF(0) has three main subunits: a, b and c.

The protein localises to the cell inner membrane. In terms of biological role, produces ATP from ADP in the presence of a proton gradient across the membrane. The sequence is that of ATP synthase epsilon chain from Rhodopseudomonas palustris (strain ATCC BAA-98 / CGA009).